The following is a 352-amino-acid chain: Photosystem II D2 protein (352 aa).

The helical transmembrane segment at 40 to 60 threads the bilayer; the sequence is CAYLALGGWLTGTSFVTSWYT. His117 is a binding site for chlorophyll a. The chain crosses the membrane as a helical span at residues 124–140; the sequence is GFMLRQFEIARLVGVRP. Residues Gln129 and Asn142 each coordinate pheophytin a. A helical membrane pass occupies residues 152-165; sequence VFVSVFLMYPLGQS. Chlorophyll a is bound at residue His197. A helical membrane pass occupies residues 207 to 227; sequence GALLCAIHGATVENTLFEDSE. A plastoquinone is bound by residues His214 and Phe261. His214 is a binding site for Fe cation. Fe cation is bound at residue His268. A helical membrane pass occupies residues 278–294; the sequence is GLWMSSIGIVGLALNLR.

It belongs to the reaction center PufL/M/PsbA/D family. PSII is composed of 1 copy each of membrane proteins PsbA, PsbB, PsbC, PsbD, PsbE, PsbF, PsbH, PsbI, PsbJ, PsbK, PsbL, PsbM, PsbT, PsbX, PsbY, PsbZ, Psb30/Ycf12, peripheral proteins PsbO, CyanoQ (PsbQ), PsbU, PsbV and a large number of cofactors. It forms dimeric complexes. The D1/D2 heterodimer binds P680, chlorophylls that are the primary electron donor of PSII, and subsequent electron acceptors. It shares a non-heme iron and each subunit binds pheophytin, quinone, additional chlorophylls, carotenoids and lipids. There is also a Cl(-1) ion associated with D1 and D2, which is required for oxygen evolution. The PSII complex binds additional chlorophylls, carotenoids and specific lipids. serves as cofactor.

The protein localises to the cellular thylakoid membrane. The enzyme catalyses 2 a plastoquinone + 4 hnu + 2 H2O = 2 a plastoquinol + O2. Its function is as follows. Photosystem II (PSII) is a light-driven water:plastoquinone oxidoreductase that uses light energy to abstract electrons from H(2)O, generating O(2) and a proton gradient subsequently used for ATP formation. It consists of a core antenna complex that captures photons, and an electron transfer chain that converts photonic excitation into a charge separation. The D1/D2 (PsbA/PsbD) reaction center heterodimer binds P680, the primary electron donor of PSII as well as several subsequent electron acceptors. D2 is needed for assembly of a stable PSII complex. The sequence is that of Photosystem II D2 protein from Synechococcus elongatus (strain ATCC 33912 / PCC 7942 / FACHB-805) (Anacystis nidulans R2).